The following is a 304-amino-acid chain: MNRAFSRKKDKTWMHTPEALSKHFIPYNAKFLGSTEVEQPKGTEVVRDAVRKLKFARHIKKSEGQKIPKVELQISIYGVKILEPKTKEVQHNCQLHRISFCADDKTDKRIFTFICKDSESNKHLCYVFDSEKCAEEITLTIGQAFDLAYRKFLESGGKDVETRKQIAGLQKRIQDLETENMELKNKVQDLENQLRITQVSAPPAGSMTPKSPSTDIFDMIPFSPISHQSSMPTRNGTQPPPVPSRSTEIKRDLFGAEPFDPFNCGAADFPPDIQSKLDEMQEGFKMGLTLEGTVFCLDPLDSRC.

Threonine 16 is modified (phosphothreonine). Residues 21 to 176 (SKHFIPYNAK…AGLQKRIQDL (156 aa)) enclose the PID domain. Positions 158-202 (KDVETRKQIAGLQKRIQDLETENMELKNKVQDLENQLRITQVSAP) form a coiled coil. A Phosphoserine modification is found at serine 223. Residues 223–246 (SPISHQSSMPTRNGTQPPPVPSRS) are disordered. Residues 225–237 (ISHQSSMPTRNGT) show a composition bias toward polar residues.

It belongs to the ced-6 family. In terms of assembly, homodimer. Interacts with clathrin. Interacts with GDP-bound ARF6, but not with GTP-bound ARF6. Part of a complex composed of GULP1, ACAP1 and ARF6. Interacts with ACAP1, LRP1, MEGF10 and STAB2. Widely expressed. Detected in macrophages, pancreas, kidney, skeletal muscle, heart, colon, intestine, lung, placenta and ovary.

Its subcellular location is the cytoplasm. Functionally, may function as an adapter protein. Required for efficient phagocytosis of apoptotic cells. Modulates cellular glycosphingolipid and cholesterol transport. May play a role in the internalization and endosomal trafficking of various LRP1 ligands, such as PSAP. Increases cellular levels of GTP-bound ARF6. The sequence is that of PTB domain-containing engulfment adapter protein 1 (GULP1) from Homo sapiens (Human).